The chain runs to 403 residues: Large ribosomal subunit protein uL3 (403 aa).

Residues 1-37 (MSHRKFSAPRHGSLGFLPRKRSSRHRGKVKSFPKDDP) are disordered. Position 13 is a phosphoserine (S13). A compositionally biased stretch (basic residues) spans 18–31 (PRKRSSRHRGKVKS). Residue K39 forms a Glycyl lysine isopeptide (Lys-Gly) (interchain with G-Cter in SUMO2) linkage. Residue K136 is modified to N6-acetyllysine. Glycyl lysine isopeptide (Lys-Gly) (interchain with G-Cter in SUMO2) cross-links involve residues K224 and K226. Position 245 is a tele-methylhistidine (H245). K286 and K294 each carry N6-acetyllysine; alternate. A Glycyl lysine isopeptide (Lys-Gly) (interchain with G-Cter in SUMO2); alternate cross-link involves residue K286. K294 is covalently cross-linked (Glycyl lysine isopeptide (Lys-Gly) (interchain with G-Cter in SUMO1); alternate). The residue at position 304 (S304) is a Phosphoserine. K366 carries the post-translational modification N6-acetyllysine; alternate. A Glycyl lysine isopeptide (Lys-Gly) (interchain with G-Cter in SUMO2); alternate cross-link involves residue K366. K373 carries the N6-acetyllysine modification. Glycyl lysine isopeptide (Lys-Gly) (interchain with G-Cter in SUMO2) cross-links involve residues K386, K393, and K399.

Belongs to the universal ribosomal protein uL3 family. Component of the large ribosomal subunit. Interacts with DHX33. In terms of processing, constitutively monomethylated at His-245 by METTL18. Methylation at His-245 regulates translation elongation by slowing ribosome traversal on tyrosine codons: slower elongation provides enough time for proper folding of synthesized proteins and prevents cellular aggregation of tyrosine-rich proteins It is not required for incorporation of RPL3 into ribosomes.

It is found in the nucleus. Its subcellular location is the nucleolus. The protein localises to the cytoplasm. In terms of biological role, component of the large ribosomal subunit. The ribosome is a large ribonucleoprotein complex responsible for the synthesis of proteins in the cell. The polypeptide is Large ribosomal subunit protein uL3 (RPL3) (Macaca fascicularis (Crab-eating macaque)).